A 231-amino-acid chain; its full sequence is Thermonuclease (231 aa).

The N-terminal stretch at 1 to 26 (MLVMTEYLLSAGICMAIVSILLIGMA) is a signal peptide. Propeptides lie at residues 27-63 (ISNV…SANA) and 64-82 (SQTD…TVYS). Over residues 61 to 73 (ANASQTDNGVNRS) the composition is skewed to polar residues. The tract at residues 61–86 (ANASQTDNGVNRSGSEDPTVYSATST) is disordered. A Ca(2+)-binding site is contributed by Asp103. Arg117 is a catalytic residue. Residues Asp122 and Thr123 each contribute to the Ca(2+) site. Active-site residues include Glu125 and Arg169. The segment covering 203–219 (HEQHLRKSEAQAKKEKL) has biased composition (basic and acidic residues). The disordered stretch occupies residues 203–231 (HEQHLRKSEAQAKKEKLNIWSEDNADSGQ).

This sequence belongs to the thermonuclease family. It depends on Ca(2+) as a cofactor.

It is found in the secreted. The protein resides in the membrane. The enzyme catalyses Endonucleolytic cleavage to nucleoside 3'-phosphates and 3'-phosphooligonucleotide end-products.. Its function is as follows. Enzyme that catalyzes the hydrolysis of both DNA and RNA at the 5' position of the phosphodiester bond. The protein is Thermonuclease of Staphylococcus aureus.